The primary structure comprises 1009 residues: Rho-type GTPase-activating protein 2 (1009 aa).

LIM zinc-binding domains are found at residues 11–68 (SLCV…DCSD) and 69–129 (KCTN…LLRK). Residues 143 to 155 (KEDFPIKLPERSV) are compositionally biased toward basic and acidic residues. 5 disordered regions span residues 143–228 (KEDF…RTVS), 358–433 (TKEN…LSRS), 449–608 (TSEM…DATD), 664–709 (TREK…ASPK), and 723–780 (QVGD…DYTP). The segment covering 162–196 (TRINGKSDVSTNNTAISKNLVSSNEDQQLTPQVLV) has biased composition (polar residues). Residues 212–222 (DNSKDREETSS) show a composition bias toward basic and acidic residues. Polar residues-rich tracts occupy residues 363-385 (KSSQGIQTSTSKSMNHVSPITRT) and 399-414 (LRLSDNGSFSRPQTAD). The span at 481 to 491 (NIRKSKAKKNP) shows a compositional bias: basic residues. Polar residues-rich tracts occupy residues 493–510 (SRGQSDSTIYNTLPQHGN) and 522–553 (QSSLGSISKKQNSNDTATNRRINGSFTSSSSG). Residues 664-682 (TREKDKQSASSRESLEQKE) are compositionally biased toward basic and acidic residues. Composition is skewed to polar residues over residues 683–707 (NIATSITVKSPSSNSDRKGSISNAS) and 728–749 (ESQQRSPNSSSGGTTNIAQKEI). A Phosphoserine modification is found at S763. In terms of domain architecture, Rho-GAP spans 788-1006 (SSLQARCAYE…FILGNYRDIF (219 aa)).

In terms of biological role, GTPase-activating protein (GAP) for CDC42 and/or RHO1. The chain is Rho-type GTPase-activating protein 2 (RGA2) from Saccharomyces cerevisiae (strain ATCC 204508 / S288c) (Baker's yeast).